The following is a 74-amino-acid chain: ATP synthase subunit c (74 aa).

A run of 2 helical transmembrane segments spans residues 8 to 28 and 52 to 72; these read FIGIGLMAIGMYGAALGVSNI and IGAGLAEAMGLFSFVIAMLLI.

The protein belongs to the ATPase C chain family. In terms of assembly, F-type ATPases have 2 components, F(1) - the catalytic core - and F(0) - the membrane proton channel. F(1) has five subunits: alpha(3), beta(3), gamma(1), delta(1), epsilon(1). F(0) has three main subunits: a(1), b(2) and c(10-14). The alpha and beta chains form an alternating ring which encloses part of the gamma chain. F(1) is attached to F(0) by a central stalk formed by the gamma and epsilon chains, while a peripheral stalk is formed by the delta and b chains.

The protein localises to the cell inner membrane. In terms of biological role, f(1)F(0) ATP synthase produces ATP from ADP in the presence of a proton or sodium gradient. F-type ATPases consist of two structural domains, F(1) containing the extramembraneous catalytic core and F(0) containing the membrane proton channel, linked together by a central stalk and a peripheral stalk. During catalysis, ATP synthesis in the catalytic domain of F(1) is coupled via a rotary mechanism of the central stalk subunits to proton translocation. Functionally, key component of the F(0) channel; it plays a direct role in translocation across the membrane. A homomeric c-ring of between 10-14 subunits forms the central stalk rotor element with the F(1) delta and epsilon subunits. The protein is ATP synthase subunit c of Rickettsia felis (strain ATCC VR-1525 / URRWXCal2) (Rickettsia azadi).